A 481-amino-acid polypeptide reads, in one-letter code: ATP synthase subunit beta (481 aa).

Glycine 160 to threonine 167 is a binding site for ATP.

This sequence belongs to the ATPase alpha/beta chains family. In terms of assembly, F-type ATPases have 2 components, CF(1) - the catalytic core - and CF(0) - the membrane proton channel. CF(1) has five subunits: alpha(3), beta(3), gamma(1), delta(1), epsilon(1). CF(0) has three main subunits: a(1), b(2) and c(9-12). The alpha and beta chains form an alternating ring which encloses part of the gamma chain. CF(1) is attached to CF(0) by a central stalk formed by the gamma and epsilon chains, while a peripheral stalk is formed by the delta and b chains.

Its subcellular location is the cell inner membrane. It catalyses the reaction ATP + H2O + 4 H(+)(in) = ADP + phosphate + 5 H(+)(out). In terms of biological role, produces ATP from ADP in the presence of a proton gradient across the membrane. The catalytic sites are hosted primarily by the beta subunits. The protein is ATP synthase subunit beta of Anaeromyxobacter sp. (strain Fw109-5).